The following is a 513-amino-acid chain: Cytochrome P450 monooxygenase eqxH (513 aa).

Residues 13–32 (QYAILCGITVFTLFIVQLSL) traverse the membrane as a helical segment. N130 and N295 each carry an N-linked (GlcNAc...) asparagine glycan. Residue C449 coordinates heme.

It belongs to the cytochrome P450 family. The cofactor is heme.

Its subcellular location is the membrane. It participates in mycotoxin biosynthesis. Cytochrome P450 monooxygenase; part of the gene cluster that mediates the biosynthesis of equisetin, a trans-fused decalin-containing tetramic acid with antimicrobial activity. The PKS module of eqxS together with the enoylreductase eqxC catalyze the formation of the polyketide unit which is then conjugated to L-serine by the condensation domain of the eqxS NRPS module. Activity of the Dieckmann cyclase domain (RED) results in release of the Dieckmann product intermediate. Diels-Alderase eqx3 is involved in endo-selective Diels-Alder cycloaddition to form the decalin ring, leading to the production of N-desmethylequisetin also called trichosetin. Subsequent N-methylation is carried out by eqxD to give equisetin. The chain is Cytochrome P450 monooxygenase eqxH from Fusarium heterosporum.